The chain runs to 117 residues: uncharacterized protein (117 aa).

Its subcellular location is the cytoplasm. The protein localises to the nucleus. This is an uncharacterized protein from Saccharomyces cerevisiae (strain ATCC 204508 / S288c) (Baker's yeast).